Here is a 447-residue protein sequence, read N- to C-terminus: UPF0210 protein LBUL_0934 (447 aa).

The protein belongs to the UPF0210 family. Homodimer.

This Lactobacillus delbrueckii subsp. bulgaricus (strain ATCC BAA-365 / Lb-18) protein is UPF0210 protein LBUL_0934.